A 173-amino-acid polypeptide reads, in one-letter code: Small ribosomal subunit protein uS5 (173 aa).

Residues 17–80 (LREKMIAVNR…EEARRNMVKV (64 aa)) enclose the S5 DRBM domain.

It belongs to the universal ribosomal protein uS5 family. In terms of assembly, part of the 30S ribosomal subunit. Contacts proteins S4 and S8.

Functionally, with S4 and S12 plays an important role in translational accuracy. Its function is as follows. Located at the back of the 30S subunit body where it stabilizes the conformation of the head with respect to the body. The polypeptide is Small ribosomal subunit protein uS5 (Acidovorax sp. (strain JS42)).